The sequence spans 287 residues: Large ribosomal subunit protein uL2 (287 aa).

2 stretches are compositionally biased toward basic residues: residues 209 to 220 (GRNRWKARRPKV) and 258 to 287 (KTRKKKKQSNKLIVRRRRRSSKRSRGGRQS). Residues 209–287 (GRNRWKARRP…SKRSRGGRQS (79 aa)) are disordered.

Belongs to the universal ribosomal protein uL2 family. In terms of assembly, part of the 50S ribosomal subunit. Forms a bridge to the 30S subunit in the 70S ribosome.

Functionally, one of the primary rRNA binding proteins. Required for association of the 30S and 50S subunits to form the 70S ribosome, for tRNA binding and peptide bond formation. It has been suggested to have peptidyltransferase activity; this is somewhat controversial. Makes several contacts with the 16S rRNA in the 70S ribosome. This is Large ribosomal subunit protein uL2 from Acaryochloris marina (strain MBIC 11017).